The sequence spans 937 residues: AP-2 complex subunit beta (937 aa).

Thr2 is subject to N-acetylthreonine. Ser4 carries the post-translational modification Phosphoserine. An N6-acetyllysine modification is found at Lys265. Residue Tyr737 is modified to Phosphotyrosine; by SRC. Residues Trp841–Asn937 are interaction with ARRB1. Position 928 is a phosphotyrosine (Tyr928).

Belongs to the adaptor complexes large subunit family. As to quaternary structure, adaptor protein complex 2 (AP-2) is a heterotetramer composed of two large adaptins (alpha-type subunit AP2A1 or AP2A2 and beta-type subunit AP2B1), a medium adaptin (mu-type subunit AP2M1) and a small adaptin (sigma-type subunit AP2S1). Interacts with EPN1. Interacts with EPS15; clathrin competes with EPS15. Interacts with SNAP91; clathrin competes with SNAP91. Interacts with CLTC; clathrin competes with EPS15, SNAP91 and PIP5K1C. Interacts with LDLRAP1. Interacts with AMPH and BIN1. Interacts with ARF6 (GDP-bound). Interacts (dephosphorylated at Tyr-737) with ARRB1; phosphorylation of AP2B1 at Tyr-737 disrupts the interaction. Interacts with SLC2A8. Interacts with SCYL1 and SCYL2. Interacts with TGFBR1 and TGFBR2. Interacts with PIP5K1C; clathrin competes with PIP5K1C. Interacts with DENND1B, but not with DENND1A, nor DENND1C. Interacts with FCHO1. Interacts with RFTN1. Interacts with KIAA1107. Together with AP2A1 or AP2A2 and AP2M1, it interacts with ADAM10; this interaction facilitates ADAM10 endocytosis from the plasma membrane during long-term potentiation in hippocampal neurons. Post-translationally, phosphorylation at Tyr-737 by SRC occurs at the plasma membrane in clathrin-coated vesicles (CCVs). Expressed in the brain (at protein level).

The protein resides in the cell membrane. It localises to the membrane. The protein localises to the coated pit. Component of the adaptor protein complex 2 (AP-2). Adaptor protein complexes function in protein transport via transport vesicles in different membrane traffic pathways. Adaptor protein complexes are vesicle coat components and appear to be involved in cargo selection and vesicle formation. AP-2 is involved in clathrin-dependent endocytosis in which cargo proteins are incorporated into vesicles surrounded by clathrin (clathrin-coated vesicles, CCVs) which are destined for fusion with the early endosome. The clathrin lattice serves as a mechanical scaffold but is itself unable to bind directly to membrane components. Clathrin-associated adaptor protein (AP) complexes which can bind directly to both the clathrin lattice and to the lipid and protein components of membranes are considered to be the major clathrin adaptors contributing the CCV formation. AP-2 also serves as a cargo receptor to selectively sort the membrane proteins involved in receptor-mediated endocytosis. AP-2 seems to play a role in the recycling of synaptic vesicle membranes from the presynaptic surface. AP-2 recognizes Y-X-X-[FILMV] (Y-X-X-Phi) and [ED]-X-X-X-L-[LI] endocytosis signal motifs within the cytosolic tails of transmembrane cargo molecules. AP-2 may also play a role in maintaining normal post-endocytic trafficking through the ARF6-regulated, non-clathrin pathway. During long-term potentiation in hippocampal neurons, AP-2 is responsible for the endocytosis of ADAM10. The AP-2 beta subunit acts via its C-terminal appendage domain as a scaffolding platform for endocytic accessory proteins; at least some clathrin-associated sorting proteins (CLASPs) are recognized by their [DE]-X(1,2)-F-X-X-[FL]-X-X-X-R motif. The AP-2 beta subunit binds to clathrin heavy chain, promoting clathrin lattice assembly; clathrin displaces at least some CLASPs from AP2B1 which probably then can be positioned for further coat assembly. This is AP-2 complex subunit beta (AP2B1) from Homo sapiens (Human).